We begin with the raw amino-acid sequence, 345 residues long: Homeobox-leucine zipper protein HOX16 (345 aa).

The segment at residues 76-135 is a DNA-binding region (homeobox); it reads LPEKKRRLTPEQVHLLERSFEEENKLEPERKTELARKLGLQPRQVAVWFQNRRARWKTKQ. The leucine-zipper stretch occupies residues 134–178; the sequence is KQLERDFDRLKASFDALRADHDALLQDNHRLHSQVMSLTEKLQEK. The disordered stretch occupies residues 220–241; that stretch reads FEEQQEQQVKAEDRLSTGSGGS.

Belongs to the HD-ZIP homeobox family. Class I subfamily. In terms of tissue distribution, expressed in seedlings, stems, leaf sheaths and blades and panicles.

It localises to the nucleus. In terms of biological role, probable transcription factor. This is Homeobox-leucine zipper protein HOX16 (HOX16) from Oryza sativa subsp. indica (Rice).